Here is an 86-residue protein sequence, read N- to C-terminus: MIOREX complex component 7 (86 aa).

In terms of assembly, associates with the mitochondrial ribosome.

The protein resides in the mitochondrion. Functionally, component of MIOREX complexes, large expressome-like assemblies of ribosomes with factors involved in all the steps of post-transcriptional gene expression. The polypeptide is MIOREX complex component 7 (Saccharomyces cerevisiae (strain ATCC 204508 / S288c) (Baker's yeast)).